The chain runs to 71 residues: Small ribosomal subunit protein eS17 (71 aa).

The protein belongs to the eukaryotic ribosomal protein eS17 family.

The polypeptide is Small ribosomal subunit protein eS17 (Pyrobaculum arsenaticum (strain DSM 13514 / JCM 11321 / PZ6)).